The following is a 706-amino-acid chain: Elongation factor G (706 aa).

Residues 15 to 291 (LKTRNIGISA…GVLDYLASPV (277 aa)) form the tr-type G domain. GTP contacts are provided by residues 24 to 31 (AHIDSGKT), 91 to 95 (DTPGH), and 145 to 148 (NKLD).

Belongs to the TRAFAC class translation factor GTPase superfamily. Classic translation factor GTPase family. EF-G/EF-2 subfamily.

It is found in the cytoplasm. Catalyzes the GTP-dependent ribosomal translocation step during translation elongation. During this step, the ribosome changes from the pre-translocational (PRE) to the post-translocational (POST) state as the newly formed A-site-bound peptidyl-tRNA and P-site-bound deacylated tRNA move to the P and E sites, respectively. Catalyzes the coordinated movement of the two tRNA molecules, the mRNA and conformational changes in the ribosome. The protein is Elongation factor G of Leptospira interrogans serogroup Icterohaemorrhagiae serovar copenhageni (strain Fiocruz L1-130).